The following is a 449-amino-acid chain: MGKEKVHMNLVVVGHVDAGKSTATGHLIYKCGGIDKRTIEKFEKEAADIGKASFKYAWVLDKLKAERERGITIDIALWKFESPKSVFTIIDAPGHRDFIKNMITGTSQADAAILIIASAQGEFEAGISKDGQTREHALLAFTLGVKQMVVCCNKMDDKTVNYGQERYDEIVKEVSAYIKKVGYNVEKVRFVPISGWQGDNMIEKSEKMPWYKGPTLLEALDMLEPPVRPSDKPLRLPLQDVYKIGGIGTVPVGRVETGVMKPGDVVTFAPANVTTEVKSIEMHHEQLAEATPGDNVGFNVKNVSVKDIRRGNVCGNTKNDPPKEAADFTAQVIILNHPGQIGNGYAPVLDCHTSHIACKFAEIESKIDRRSGKELEKAPKSIKSGDAAIVRMVPQKPMCVEVFNDYAPLGRFAVRDMRQTVAVGIIKAVTKKDGSGGKVTKAAVKASKK.

The tr-type G domain occupies 5–230 (KVHMNLVVVG…DMLEPPVRPS (226 aa)). The G1 stretch occupies residues 14–21 (GHVDAGKS). Residue 14 to 21 (GHVDAGKS) coordinates GTP. The G2 stretch occupies residues 70–74 (GITID). The tract at residues 91–94 (DAPG) is G3. Residues 91–95 (DAPGH) and 153–156 (NKMD) each bind GTP. The G4 stretch occupies residues 153–156 (NKMD). Residues 194–196 (SGW) form a G5 region. 5-glutamyl glycerylphosphorylethanolamine is present on Glu-362.

It belongs to the TRAFAC class translation factor GTPase superfamily. Classic translation factor GTPase family. EF-Tu/EF-1A subfamily. In terms of processing, phosphatidylethanolamine (PE) is a direct precursor of the ethanolamine-phosphoglycerol (EPG) moiety.

The protein resides in the cytoplasm. Its function is as follows. This protein promotes the GTP-dependent binding of aminoacyl-tRNA to the A-site of ribosomes during protein biosynthesis. The chain is Elongation factor 1-alpha 1 (TEF1) from Trypanosoma brucei brucei (strain 927/4 GUTat10.1).